Reading from the N-terminus, the 607-residue chain is Karyogamy meiotic segregation protein 1 (607 aa).

The tract at residues 83–135 (DDSFANQAEKPSMEQQNSKNSIKEDANEHSVNSAHSKSSSNASPESLNPSQMM) is disordered. The segment covering 111-132 (HSVNSAHSKSSSNASPESLNPS) has biased composition (low complexity).

In terms of assembly, interacts with mcp1 and sad1.

The protein resides in the cytoplasm. It is found in the cytoskeleton. Its subcellular location is the microtubule organizing center. It localises to the spindle pole body. Its function is as follows. Has a role in karyogamy, recombination and segregation during meiosis. Although it has been shown to associate with the spindle pole body it is unlikely to be involved in its formation or maintenance. This is Karyogamy meiotic segregation protein 1 (kms1) from Schizosaccharomyces pombe (strain 972 / ATCC 24843) (Fission yeast).